Reading from the N-terminus, the 121-residue chain is Snaclec coagulation factor IX-binding protein subunit A (121 aa).

The region spanning 1–120 is the C-type lectin domain; that stretch reads YEGHCYQTFK…CGERNPFVCE (120 aa). 2 cysteine pairs are disulfide-bonded: Cys-22-Cys-119 and Cys-94-Cys-111. Residues Ser-33, Glu-35, and Glu-39 each contribute to the Ca(2+) site. Glu-120 contacts Ca(2+).

Belongs to the snaclec family. As to quaternary structure, heterodimer of subunits A and B; disulfide-linked. In terms of tissue distribution, expressed by the venom gland.

The protein localises to the secreted. Its function is as follows. Anticoagulant protein which binds to the gamma-carboxyglutamic acid-domain regions of factor IX (F9) (but not factor X) in the presence of calcium with a 1 to 1 stoichiometry. This Gloydius halys (Chinese water mocassin) protein is Snaclec coagulation factor IX-binding protein subunit A.